The sequence spans 103 residues: Small ribosomal subunit protein uS10 (103 aa).

It belongs to the universal ribosomal protein uS10 family. As to quaternary structure, part of the 30S ribosomal subunit.

In terms of biological role, involved in the binding of tRNA to the ribosomes. The polypeptide is Small ribosomal subunit protein uS10 (Bordetella petrii (strain ATCC BAA-461 / DSM 12804 / CCUG 43448)).